The primary structure comprises 330 residues: Copper-containing nitrite reductase (330 aa).

Plastocyanin-like domains are found at residues 1–165 and 166–330; these read GLPR…YDRV and YTIG…PGPA. 7 residues coordinate Cu cation: His-85, His-90, His-125, Cys-126, His-135, Met-140, and His-296.

It belongs to the multicopper oxidase family. In terms of assembly, homotrimer. The cofactor is Cu(2+). It depends on Cu(+) as a cofactor. FAD serves as cofactor.

The protein resides in the periplasm. It carries out the reaction nitric oxide + Fe(III)-[cytochrome c] + H2O = Fe(II)-[cytochrome c] + nitrite + 2 H(+). Its pathway is nitrogen metabolism; nitrate reduction (denitrification); dinitrogen from nitrate: step 2/4. The protein is Copper-containing nitrite reductase (nirK) of Alcaligenes xylosoxydans xylosoxydans (Achromobacter xylosoxidans).